A 130-amino-acid polypeptide reads, in one-letter code: Small ribosomal subunit protein uS11 (130 aa).

The protein belongs to the universal ribosomal protein uS11 family. Part of the 30S ribosomal subunit. Interacts with proteins S7 and S18. Binds to IF-3.

Located on the platform of the 30S subunit, it bridges several disparate RNA helices of the 16S rRNA. Forms part of the Shine-Dalgarno cleft in the 70S ribosome. This chain is Small ribosomal subunit protein uS11, found in Syntrophobacter fumaroxidans (strain DSM 10017 / MPOB).